The chain runs to 399 residues: Phosphomevalonate dehydratase large subunit (399 aa).

(R)-5-phosphomevalonate contacts are provided by G54, V55, S56, N85, and P86. C125 serves as a coordination point for [4Fe-4S] cluster. 2 residues coordinate (R)-5-phosphomevalonate: E144 and S145. The [4Fe-4S] cluster site is built by C298 and C355. K375 provides a ligand contact to (R)-5-phosphomevalonate.

It belongs to the AcnX type II large subunit family. In terms of assembly, heterodimer composed of a large subunit (PMDh-L) and a small subunit (PMDh-S). The cofactor is [4Fe-4S] cluster.

The enzyme catalyses (R)-5-phosphomevalonate = (2E)-3-methyl-5-phosphooxypent-2-enoate + H2O. It participates in isoprenoid biosynthesis; isopentenyl diphosphate biosynthesis via mevalonate pathway. In terms of biological role, component of a hydro-lyase that catalyzes the dehydration of mevalonate 5-phosphate (MVA5P) to form trans-anhydromevalonate 5-phosphate (tAHMP). Involved in the archaeal mevalonate (MVA) pathway, which provides fundamental precursors for isoprenoid biosynthesis, such as isopentenyl diphosphate (IPP) and dimethylallyl diphosphate (DMAPP). This Methanothermobacter thermautotrophicus (strain ATCC 29096 / DSM 1053 / JCM 10044 / NBRC 100330 / Delta H) (Methanobacterium thermoautotrophicum) protein is Phosphomevalonate dehydratase large subunit.